The sequence spans 207 residues: Sodium/potassium-transporting ATPase subunit beta-1-interacting protein 1 (207 aa).

A run of 3 helical transmembrane segments spans residues 2-22, 35-55, and 62-82; these read GRCS…AAAL, APIL…LGTL, and LILY…IICF. Asparagine 100 carries an N-linked (GlcNAc...) asparagine glycan. The helical transmembrane segment at 147–167 threads the bilayer; it reads ALSSALQIFLALFGFVYACYV.

The protein belongs to the NKAIN family. As to quaternary structure, interacts with atp1b1 C-terminus.

The protein resides in the cell membrane. In Xenopus laevis (African clawed frog), this protein is Sodium/potassium-transporting ATPase subunit beta-1-interacting protein 1 (nkain1).